The chain runs to 130 residues: Small ribosomal subunit protein uS8 (130 aa).

This sequence belongs to the universal ribosomal protein uS8 family. Part of the 30S ribosomal subunit.

In terms of biological role, one of the primary rRNA binding proteins, it binds directly to 16S rRNA central domain where it helps coordinate assembly of the platform of the 30S subunit. This Methanoregula boonei (strain DSM 21154 / JCM 14090 / 6A8) protein is Small ribosomal subunit protein uS8.